The sequence spans 803 residues: Spondin-1 (803 aa).

The signal sequence occupies residues 1-23 (MGLIFQPLFWQYVATSYALMVLG). Residues 24–190 (FLDETVEKAI…DLTLEGGNEK (167 aa)) enclose the Reelin domain. Disulfide bonds link Cys39/Cys124, Cys152/Cys178, Cys195/Cys331, Cys196/Cys335, Cys198/Cys409, Cys437/Cys474, Cys448/Cys483, Cys453/Cys488, Cys496/Cys532, Cys507/Cys511, Cys542/Cys548, Cys553/Cys589, Cys564/Cys568, and Cys599/Cys604. The region spanning 191–383 (TIPDCCACGT…LTSLDHPQSP (193 aa)) is the Spondin domain. An N-linked (GlcNAc...) asparagine glycan is attached at Asn210. Positions 320, 349, and 353 each coordinate Ca(2+). A disordered region spans residues 353 to 389 (DSGVTYESPNKPTIPQDKIRPLTSLDHPQSPSMTRGG). Over residues 354-365 (SGVTYESPNKPT) the composition is skewed to polar residues. TSP type-1 domains are found at residues 436–489 (TCIY…PGCS), 495–549 (TCMM…EECE), 552–605 (SCIV…PECH), 608–662 (PCVL…PECP), and 664–717 (SCEL…RKCQ). Asn677 is a glycosylation site (N-linked (GlcNAc...) asparagine). The disordered stretch occupies residues 722 to 741 (NERRHLKDAREKRRSEKIKE). Residues 750 to 802 (VCKMKPWTAWTECTKFCGGGIQERFMTVKKRFKSSQFTSCKDKKEIRACNVHP) form the TSP type-1 6 domain.

In terms of tissue distribution, expressed at high levels in the floor plate.

The protein resides in the secreted. It is found in the extracellular space. It localises to the extracellular matrix. Promotes the attachment of spinal cord and sensory neuron cells and the outgrowth of neurites in vitro. May contribute to the growth and guidance of axons in both the spinal cord and the PNS. The chain is Spondin-1 (spon1) from Xenopus laevis (African clawed frog).